Here is a 1118-residue protein sequence, read N- to C-terminus: Repetin (1118 aa).

Positions 1–91 (MPQLLNSILN…VQACHHKLDS (91 aa)) are S-100-like. 2 EF-hand domains span residues 13–48 (KVFQ…LRRP) and 49–84 (NDPE…LVQA). Serine 27, glutamate 32, aspartate 62, aspartate 64, asparagine 66, tyrosine 68, and glutamate 73 together coordinate Ca(2+). The segment at 94–1118 (YGSRTSSQKE…YVQEQAAYQY (1025 aa)) is disordered. The span at 100-115 (SQKEHDQEGTRSHKFS) shows a compositional bias: basic and acidic residues. Residues 138–148 (SEGQHQNVQHD) are compositionally biased toward polar residues. 2 stretches are compositionally biased toward basic and acidic residues: residues 149–164 (QSQR…DTDP) and 172–186 (FHGD…RQDT). Residues 237–252 (GQSKTSGQQSSHGQSG) show a composition bias toward low complexity. The segment covering 259–299 (YSSQTSQQESDSYEQYGSQHQKSGNSQTERQGQNSQYGQTN) has biased composition (polar residues). 48 consecutive repeat copies span residues 273 to 284 (QYGSQHQKSGNS), 285 to 296 (QTERQGQNSQYG), 297 to 308 (QTNKKGHSSYHE), 309 to 320 (QTEGQGQSFHYG), 321 to 332 (QKGRKDQSFQQG), 333 to 344 (QKGRKDQSPHLG), 345 to 356 (QKGRQDQSPHRG), 357 to 368 (QKGRQDQSPHQG), 369 to 380 (QKGRQDQSPHRG), 381 to 392 (QKGRQDQSPHQG), 393 to 404 (QKGRQDQSPHLG), 405 to 416 (QKGRQDQSPHQG), 417 to 428 (QKGRQDQSPHQG), 429 to 440 (QKGRQDQSSHQG), 441 to 452 (QKGRQDQSSHQG), 453 to 464 (QKGRQDQSSHQG), 465 to 476 (QKGRQDQSSHQG), 477 to 488 (QREGQDQNSQWH), 489 to 500 (RTDSQGQSFHYG), 501 to 512 (QTGGHSLSSHQG), 513 to 524 (QTDSQGQNSNWH), 525 to 536 (RTDSQGQSFHYG), 537 to 548 (QTGGQGLSSHQG), 549 to 560 (QTDSQGQNSNWH), 561 to 572 (RTDSQGQSFHFD), 573 to 584 (QAGREVQGSHHG), 585 to 596 (QTDRQSQNSNWH), 597 to 608 (RTDSQGQSFHFD), 609 to 620 (QAGKEVQGSHQG), 621 to 632 (QTDSQGQSSHWH), 633 to 644 (QTDRQGQSSQQG), 645 to 656 (HKDRQGQNTHQG), 657 to 668 (QKGRQDLSPHQG), 669 to 680 (QKGRQDQSPHLG), 681 to 692 (QKGRHDQSPHQG), 693 to 704 (QKGRHDQSPHQG), 705 to 716 (QKGRQDLSSHQG), 717 to 728 (QKGRQDQSPHLG), 729 to 740 (QKGRHDQSPHRG), 741 to 752 (QKGRQDQSPHQG), 753 to 764 (QKGRQDQSSHQG), 765 to 776 (QREGQDQNSHWH), 777 to 788 (RTDRQGQSFHYG), 789 to 800 (QTGGQGLSSHQG), 801 to 812 (QTDSQGQNSQWH), 813 to 824 (RTDSQGQSFHFD), 825 to 836 (QAGREGQSSHHG), and 837 to 848 (QTDRQSQSSHCG). The segment at 273–848 (QYGSQHQKSG…DRQSQSSHCG (576 aa)) is 48 X 12 AA approximate tandem repeats of Q-[KT]-[GD]-[RS]-Q-[DG]-Q-S-[PS]-H-X-G. Residues 321-764 (QKGRKDQSFQ…GRQDQSSHQG (444 aa)) are 22 X 12 AA approximate tandem repeats of Q-K-G-R-Q-D-Q-S-P-H-Q-G. Composition is skewed to basic and acidic residues over residues 347-363 (GRQD…RQDQ) and 371-387 (GRQD…RQDQ). Polar residues predominate over residues 434 to 466 (DQSSHQGQKGRQDQSSHQGQKGRQDQSSHQGQK). The span at 467 to 481 (GRQDQSSHQGQREGQ) shows a compositional bias: basic and acidic residues. Polar residues-rich tracts occupy residues 482 to 535 (DQNS…SFHY) and 543 to 570 (LSSH…QSFH). 2 stretches are compositionally biased toward polar residues: residues 587-606 (DRQS…QSFH) and 616-643 (GSHQ…SSQQ). Polar residues predominate over residues 710-726 (DLSSHQGQKGRQDQSPH). Basic and acidic residues-rich tracts occupy residues 731 to 747 (GRHD…RQDQ) and 755 to 769 (GRQD…REGQ). Polar residues-rich tracts occupy residues 795–822 (LSSH…QSFH), 833–848 (SHHG…SHCG), and 855–864 (TENQGQNRHS). The span at 865 to 875 (LGTDRTRRDSY) shows a compositional bias: basic and acidic residues. Residues 876–889 (VEQSGRSVKLSQQN) are compositionally biased toward polar residues. 5 stretches are compositionally biased toward basic and acidic residues: residues 890 to 908 (SREE…RREQ), 947 to 965 (EQDH…HSVE), 978 to 998 (THEE…DEQN), 1005 to 1045 (QTHE…KEKY), and 1056 to 1065 (PNREKSHMSE).

This sequence belongs to the S100-fused protein family. Potential substrate of transglutaminase. Some arginines are probably converted to citrullines by peptidylarginine deimidase. As to expression, detectable in the stratified internal epithelia of forestomach and tongue and to a lesser degree in normal skin epidermis, where it is restricted to the differentiated suprabasal cell layers. Overexpressed in skin tumors.

Its subcellular location is the secreted. The protein resides in the extracellular space. The protein localises to the extracellular matrix. Involved in the cornified cell envelope formation. Multifunctional epidermal matrix protein. The polypeptide is Repetin (Rptn) (Mus musculus (Mouse)).